The chain runs to 243 residues: Phosphate-specific transport system accessory protein PhoU (243 aa).

It belongs to the PhoU family. Homodimer. Interacts with phosphate regulon transcriptional regulatory protein PhoB and ferric uptake regulation protein Fur.

It localises to the cytoplasm. Its function is as follows. Part of the phosphate (Pho) regulon, which plays a key role in phosphate homeostasis. Encoded together with proteins of the phosphate-specific transport (Pst) system in the polycistronic pstSCAB-phoU operon. PhoU is essential for the repression of the Pho regulon at high phosphate conditions. In this role, it may bind, possibly as a chaperone, to PhoR, PhoB or a PhoR-PhoB complex to promote dephosphorylation of phospho-PhoB, or inhibit formation of the PhoR-PhoB transitory complex. The sequence is that of Phosphate-specific transport system accessory protein PhoU from Edwardsiella tarda.